The chain runs to 126 residues: Plastocyanin (126 aa).

The N-terminal stretch at 1–28 (MSKKFLTILAGLLLVVSSFFLSVSPAAA) is a signal peptide. Residues 29-126 (ANATVKMGSD…AGMVGKVVVE (98 aa)) enclose the Plastocyanin-like domain. Residues H67, C111, H114, and M119 each contribute to the Cu cation site.

Belongs to the plastocyanin family. It depends on Cu(2+) as a cofactor.

It is found in the cellular thylakoid membrane. Participates in electron transfer between P700 and the cytochrome b6-f complex in photosystem I. The protein is Plastocyanin (petE) of Synechocystis sp. (strain ATCC 27184 / PCC 6803 / Kazusa).